Reading from the N-terminus, the 450-residue chain is Phosphoglucosamine mutase (450 aa).

Residue S102 is the Phosphoserine intermediate of the active site. S102, D244, D246, and D248 together coordinate Mg(2+). Phosphoserine is present on S102.

The protein belongs to the phosphohexose mutase family. It depends on Mg(2+) as a cofactor. In terms of processing, activated by phosphorylation.

The catalysed reaction is alpha-D-glucosamine 1-phosphate = D-glucosamine 6-phosphate. Its function is as follows. Catalyzes the conversion of glucosamine-6-phosphate to glucosamine-1-phosphate. The protein is Phosphoglucosamine mutase of Desulfovibrio desulfuricans (strain ATCC 27774 / DSM 6949 / MB).